We begin with the raw amino-acid sequence, 565 residues long: NAD-dependent malic enzyme (565 aa).

Tyr-104 serves as the catalytic Proton donor. An NAD(+)-binding site is contributed by Arg-157. Lys-175 functions as the Proton acceptor in the catalytic mechanism. A divalent metal cation-binding residues include Glu-246, Asp-247, and Asp-270. NAD(+)-binding residues include Asp-270 and Asn-418.

The protein belongs to the malic enzymes family. Homotetramer. Mg(2+) is required as a cofactor. The cofactor is Mn(2+).

The catalysed reaction is (S)-malate + NAD(+) = pyruvate + CO2 + NADH. It carries out the reaction oxaloacetate + H(+) = pyruvate + CO2. This Pectobacterium carotovorum subsp. carotovorum (strain PC1) protein is NAD-dependent malic enzyme.